Consider the following 139-residue polypeptide: D-ribose pyranase (139 aa).

The Proton donor role is filled by histidine 20. Residues aspartate 28, histidine 106, and 128–130 (YAN) each bind substrate.

This sequence belongs to the RbsD / FucU family. RbsD subfamily. As to quaternary structure, homodecamer.

It localises to the cytoplasm. It catalyses the reaction beta-D-ribopyranose = beta-D-ribofuranose. The protein operates within carbohydrate metabolism; D-ribose degradation; D-ribose 5-phosphate from beta-D-ribopyranose: step 1/2. Functionally, catalyzes the interconversion of beta-pyran and beta-furan forms of D-ribose. This Salmonella agona (strain SL483) protein is D-ribose pyranase.